The primary structure comprises 89 residues: UPF0367 protein PMM0124 (89 aa).

Belongs to the UPF0367 family.

This is UPF0367 protein PMM0124 from Prochlorococcus marinus subsp. pastoris (strain CCMP1986 / NIES-2087 / MED4).